The sequence spans 214 residues: MSAIEMKLDAELRTETGRGASRRLRRAKRVPAIMYGGHQEPQAITLNLLQLDRLMQEEAFYSQILTVNLDGKSEQVIVKDLQRHPFKPLVEHVDLQRVVAGEKVHTSVPVHFVNEDKAPGIKAGGIIHHDLNEIEIACLPKDLPEYLEVDVSALELGSAIHLSDVPLPAGVEIPELVQGADHDHPVVSIHASRKAKADEDEAAEGEEGEEGAED.

The interval 189-214 is disordered; it reads IHASRKAKADEDEAAEGEEGEEGAED. The segment covering 198-214 has biased composition (acidic residues); it reads DEDEAAEGEEGEEGAED.

Belongs to the bacterial ribosomal protein bL25 family. CTC subfamily. As to quaternary structure, part of the 50S ribosomal subunit; part of the 5S rRNA/L5/L18/L25 subcomplex. Contacts the 5S rRNA. Binds to the 5S rRNA independently of L5 and L18.

This is one of the proteins that binds to the 5S RNA in the ribosome where it forms part of the central protuberance. The sequence is that of Large ribosomal subunit protein bL25 from Alkalilimnicola ehrlichii (strain ATCC BAA-1101 / DSM 17681 / MLHE-1).